An 86-amino-acid chain; its full sequence is Co-chaperonin GroES (86 aa).

It belongs to the GroES chaperonin family. Heptamer of 7 subunits arranged in a ring. Interacts with the chaperonin GroEL.

Its subcellular location is the cytoplasm. Together with the chaperonin GroEL, plays an essential role in assisting protein folding. The GroEL-GroES system forms a nano-cage that allows encapsulation of the non-native substrate proteins and provides a physical environment optimized to promote and accelerate protein folding. GroES binds to the apical surface of the GroEL ring, thereby capping the opening of the GroEL channel. This Campylobacter jejuni subsp. doylei (strain ATCC BAA-1458 / RM4099 / 269.97) protein is Co-chaperonin GroES.